A 156-amino-acid polypeptide reads, in one-letter code: MRSSAKQEELVKAFKALLKEEKFSSQGEIVQALQDQGFENINQSKVSRMLTKFGAVRTRNAKMEMVYCLPVELGVPTTSSPLKNLVLDIDYNDAVVVIHTSPGAAQLIARLLDSLGKAEGILGTIAGDDTIFTTPARGFTVKDLYEAILVLFEQEL.

It belongs to the ArgR family.

It localises to the cytoplasm. Its pathway is amino-acid biosynthesis; L-arginine biosynthesis [regulation]. Functionally, regulates arginine biosynthesis genes. This Cronobacter sakazakii (strain ATCC BAA-894) (Enterobacter sakazakii) protein is Arginine repressor.